Consider the following 88-residue polypeptide: Small ribosomal subunit protein uS15 (88 aa).

This sequence belongs to the universal ribosomal protein uS15 family. In terms of assembly, part of the 30S ribosomal subunit. Forms a bridge to the 50S subunit in the 70S ribosome, contacting the 23S rRNA.

One of the primary rRNA binding proteins, it binds directly to 16S rRNA where it helps nucleate assembly of the platform of the 30S subunit by binding and bridging several RNA helices of the 16S rRNA. In terms of biological role, forms an intersubunit bridge (bridge B4) with the 23S rRNA of the 50S subunit in the ribosome. The chain is Small ribosomal subunit protein uS15 from Syntrophus aciditrophicus (strain SB).